Here is a 141-residue protein sequence, read N- to C-terminus: Hemoglobin subunit alpha-D (141 aa).

Positions 1 to 141 (VLTHEDCELL…VGDMLAEKYR (141 aa)) constitute a Globin domain. Residues His-58 and His-87 each coordinate heme b.

Belongs to the globin family. As to quaternary structure, there are three forms of hemoglobin in Sphenodon: A, A' and D. Hb A is a tetramer of two alpha-A and two beta-1, Hb A' is a tetramer of two alpha-a and two beta-2, Hb D is a tetramer of two alpha-D and two beta-2. Red blood cells.

Functionally, involved in oxygen transport from the lung to the various peripheral tissues. The chain is Hemoglobin subunit alpha-D (HBAD) from Sphenodon punctatus (Tuatara).